We begin with the raw amino-acid sequence, 1399 residues long: DNA-directed RNA polymerase subunit beta' (1399 aa).

Positions 71, 73, 86, and 89 each coordinate Zn(2+). Mg(2+)-binding residues include Asp-462, Asp-464, and Asp-466. 4 residues coordinate Zn(2+): Cys-810, Cys-884, Cys-891, and Cys-894. Positions 1379 to 1399 (KQAAIVPSQPEPQPLALPPAE) are disordered. Positions 1387 to 1399 (QPEPQPLALPPAE) are enriched in pro residues.

It belongs to the RNA polymerase beta' chain family. The RNAP catalytic core consists of 2 alpha, 1 beta, 1 beta' and 1 omega subunit. When a sigma factor is associated with the core the holoenzyme is formed, which can initiate transcription. Mg(2+) is required as a cofactor. Requires Zn(2+) as cofactor.

It carries out the reaction RNA(n) + a ribonucleoside 5'-triphosphate = RNA(n+1) + diphosphate. Functionally, DNA-dependent RNA polymerase catalyzes the transcription of DNA into RNA using the four ribonucleoside triphosphates as substrates. The chain is DNA-directed RNA polymerase subunit beta' from Bradyrhizobium sp. (strain ORS 278).